Consider the following 181-residue polypeptide: Inner membrane-spanning protein YciB (181 aa).

5 helical membrane-spanning segments follow: residues 10 to 30 (LVIF…GALI), 50 to 70 (MHLI…VFHD), 72 to 92 (AFIK…LGIS), 118 to 138 (ITWY…YVAF), and 148 to 168 (FKVF…VFYL).

This sequence belongs to the YciB family.

It localises to the cell inner membrane. Its function is as follows. Plays a role in cell envelope biogenesis, maintenance of cell envelope integrity and membrane homeostasis. This Shewanella putrefaciens (strain CN-32 / ATCC BAA-453) protein is Inner membrane-spanning protein YciB.